The following is a 292-amino-acid chain: Inhibitory synaptic factor 1 (292 aa).

Disordered stretches follow at residues 1–25 (MNIRGTPDLGQPSDDPSSGGERERI), 122–186 (SDSV…ERVR), and 198–292 (CDDE…KGKN). Residues 23–63 (ERIRQRMKMVIGQLEDILRELKEVAKELREVVSQIDKLTSD) are a coiled coil. The segment covering 198–214 (CDDEEGDGEEEAAEEEG) has biased composition (acidic residues). Residues 263 to 285 (RNSSTQTVSDKSTQTVLPYTATR) are compositionally biased toward polar residues.

Belongs to the INSYN1 family. In terms of assembly, interacts with GPHN.

The protein localises to the postsynaptic density. Its function is as follows. Component of the protein machinery at the inhibitory synapses, probably acting as a scaffold. Inhibitory synapses dampen neuronal activity through postsynaptic hyperpolarization. This synaptic inhibition is fundamental for the functioning of the central nervous system, shaping and orchestrating the flow of information through neuronal networks to generate a precise neural code. This is Inhibitory synaptic factor 1 from Bos taurus (Bovine).